A 750-amino-acid polypeptide reads, in one-letter code: Elastin (750 aa).

Residues Ala1–Gln24 form the signal peptide. A 4-hydroxyproline mark is found at Pro32, Pro67, Pro102, Pro176, Pro189, Pro192, and Pro211. Repeat unit 1 spans residues Gly83–Gly127. Residues Gly83–Leu686 are 8 X tandem repeats. 7 repeat units span residues Val219–Leu262, Pro263–Gly318, Val319–Val393, Pro394–Val482, Gly483–Leu554, Val555–Thr619, and Pro620–Leu686. Residues Pro276, Pro345, Pro363, Pro368, Pro441, Pro455, and Pro480 each carry the 4-hydroxyproline modification. 3 positions are modified to 4-hydroxyproline: Pro576, Pro635, and Pro720. A disulfide bridge links Cys739 with Cys745.

Belongs to the elastin family. The polymeric elastin chains are cross-linked together into an extensible 3D network. In terms of processing, elastin is formed through the cross-linking of its soluble precursor tropoelastin. Cross-linking is initiated through the action of lysyl oxidase on exposed lysines to form allysine. Subsequent spontaneous condensation reactions with other allysine or unmodified lysine residues result in various bi-, tri-, and tetrafunctional cross-links. The most abundant cross-links in mature elastin fibers are lysinonorleucine, allysine aldol, desmosine, and isodesmosine. Hydroxylated on proline residues. Post-translationally, hydroxylation on proline residues within the sequence motif, GXPG, is most likely to be 4-hydroxy as this fits the requirement for 4-hydroxylation in vertebrates.

It localises to the secreted. The protein localises to the extracellular space. It is found in the extracellular matrix. In terms of biological role, major structural protein of tissues such as aorta and nuchal ligament, which must expand rapidly and recover completely. The chain is Elastin (ELN) from Gallus gallus (Chicken).